A 508-amino-acid polypeptide reads, in one-letter code: Histidine--tRNA ligase, cytoplasmic (508 aa).

In terms of domain architecture, WHEP-TRS spans 3 to 59; it reads SPALEELVLNSRHRLVRGLKQQKASADQIEEEVAKLLKLKAQLGHDESKQKFVLKTP. A Phosphoserine modification is found at Ser-66. L-histidine contacts are provided by residues 130–132, Arg-157, Asp-177, Arg-326, and 330–331; these read DLT and YY.

The protein belongs to the class-II aminoacyl-tRNA synthetase family. In terms of assembly, homodimer.

It localises to the cytoplasm. It carries out the reaction tRNA(His) + L-histidine + ATP = L-histidyl-tRNA(His) + AMP + diphosphate + H(+). Its function is as follows. Catalyzes the ATP-dependent ligation of histidine to the 3'-end of its cognate tRNA, via the formation of an aminoacyl-adenylate intermediate (His-AMP). Plays a role in axon guidance. The polypeptide is Histidine--tRNA ligase, cytoplasmic (HARS1) (Mesocricetus auratus (Golden hamster)).